Consider the following 397-residue polypeptide: Serine/threonine-protein kinase 17A (397 aa).

The segment at 1–23 (MIPLEKPGSGGSPSAAASGSGPG) is disordered. Ser9 is subject to Phosphoserine. The region spanning 44 to 304 (LSPGRELGRG…AEECLKHPWL (261 aa)) is the Protein kinase domain. Residues 50–58 (LGRGKFAVV) and Lys73 each bind ATP. Asp169 functions as the Proton acceptor in the catalytic mechanism.

It belongs to the protein kinase superfamily. CAMK Ser/Thr protein kinase family. DAP kinase subfamily. Post-translationally, autophosphorylated. In terms of tissue distribution, highly expressed in bone marrow. Lower levels in brain, heart, lung, liver and kidney.

The protein localises to the nucleus. It carries out the reaction L-seryl-[protein] + ATP = O-phospho-L-seryl-[protein] + ADP + H(+). The enzyme catalyses L-threonyl-[protein] + ATP = O-phospho-L-threonyl-[protein] + ADP + H(+). Inhibited by thiazolidinedione-type compounds: inhibited by furan- and pyridone- thiazolidinediones. Its function is as follows. Acts as a positive regulator of apoptosis. May also act as a regulator of cellular reactive oxygen species. The polypeptide is Serine/threonine-protein kinase 17A (STK17A) (Oryctolagus cuniculus (Rabbit)).